Here is a 253-residue protein sequence, read N- to C-terminus: uncharacterized protein (253 aa).

The N-terminal stretch at 1-16 (MCVVYRTSVLILLASG) is a signal peptide. Cysteine 17 is lipidated: N-palmitoyl cysteine. Cysteine 17 carries the S-diacylglycerol cysteine lipid modification.

The protein belongs to the staphylococcal tandem lipoprotein family.

It localises to the cell membrane. This is an uncharacterized protein from Staphylococcus aureus (strain N315).